The following is a 194-amino-acid chain: uncharacterized protein (194 aa).

The SIS domain maps to 34 to 192 (VMQCLLGGNK…CELVDQTLFP (159 aa)).

The protein belongs to the SIS family. DiaA subfamily.

This is an uncharacterized protein from Haemophilus influenzae (strain ATCC 51907 / DSM 11121 / KW20 / Rd).